Reading from the N-terminus, the 453-residue chain is 5-hydroxytryptamine receptor 1 (453 aa).

Over 1-36 (MKSLKSSTHDVPHPEHVVWAPPAYDEQHHLFFSHGT) the chain is Extracellular. A helical transmembrane segment spans residues 37-57 (VLIGIVGSLIITVAVVGNVLV). The Cytoplasmic portion of the chain corresponds to 58–74 (CLAIFTEPILSHSKSNF). The helical transmembrane segment at 75 to 94 (FIVSLAVADLLLALLVMTFA) threads the bilayer. Over 95–110 (LVNDMYGYWLFGETFC) the chain is Extracellular. The cysteines at positions 110 and 225 are disulfide-linked. The chain crosses the membrane as a helical span at residues 111–133 (FIWMSADVMCETASIFSICVISY). Over 134-153 (DRLKQVQKPLHYEEFMTTTR) the chain is Cytoplasmic. The chain crosses the membrane as a helical span at residues 154–175 (ALLIIACLWICSFVLSFVPIFL). The Extracellular portion of the chain corresponds to 176-223 (EWHELSVEEIKAIFKDNKTEKEKALEAHNFSSALNQTLGDNQKSNAKH). Residues 224 to 244 (VCLFDVHFTYSVIYSFICFYV) form a helical membrane-spanning segment. Topologically, residues 245-301 (PCTLMLTNYLRLFLIAQTHQVRIRSLQMTNPPQLRGQGASSYRNQGTQGSKAARTLT) are cytoplasmic. The helical transmembrane segment at 302 to 322 (IITGTFLACWLPFFIINPIAA) threads the bilayer. The Extracellular segment spans residues 323–331 (ADEHLIPLE). A helical membrane pass occupies residues 332–352 (CFMVTIWLGYFNSSVNPIIYG). The Cytoplasmic segment spans residues 353 to 453 (TSNSKFRAAF…VFDSDTAFSS (101 aa)). Positions 397 to 428 (DLSSSEHPSDACDTGRGKNSKGGDCATADPTK) are disordered. The segment covering 403-412 (HPSDACDTGR) has biased composition (basic and acidic residues).

It belongs to the G-protein coupled receptor 1 family. As to expression, reproductive system.

It is found in the cell membrane. In terms of biological role, this is one of the several different receptors for 5-hydroxytryptamine (serotonin). 5-HT plays important roles in various behavioral and physiological processes in aplysia. These include feeding, locomotion, circadian rhythm, learning and memory, synaptic plasticity, and synaptic growth. This receptor is mediated by G proteins that stimulate phospholipase C. In Aplysia californica (California sea hare), this protein is 5-hydroxytryptamine receptor 1 (5HTB1).